Consider the following 127-residue polypeptide: Large ribosomal subunit protein uL22 (127 aa).

It belongs to the universal ribosomal protein uL22 family. As to quaternary structure, part of the 50S ribosomal subunit.

Its function is as follows. This protein binds specifically to 23S rRNA; its binding is stimulated by other ribosomal proteins, e.g. L4, L17, and L20. It is important during the early stages of 50S assembly. It makes multiple contacts with different domains of the 23S rRNA in the assembled 50S subunit and ribosome. Functionally, the globular domain of the protein is located near the polypeptide exit tunnel on the outside of the subunit, while an extended beta-hairpin is found that lines the wall of the exit tunnel in the center of the 70S ribosome. The chain is Large ribosomal subunit protein uL22 from Methylorubrum extorquens (strain CM4 / NCIMB 13688) (Methylobacterium extorquens).